The sequence spans 116 residues: Large ribosomal subunit protein bL20 (116 aa).

This sequence belongs to the bacterial ribosomal protein bL20 family.

In terms of biological role, binds directly to 23S ribosomal RNA and is necessary for the in vitro assembly process of the 50S ribosomal subunit. It is not involved in the protein synthesizing functions of that subunit. This Helicobacter acinonychis (strain Sheeba) protein is Large ribosomal subunit protein bL20.